Consider the following 66-residue polypeptide: M-poneratoxin-Dq3a (66 aa).

Positions 1-23 (MKLSALSIIFGMILVMTIMYTKA) are cleaved as a signal peptide. Residues 24–43 (EAEAEAEADADADAKAEAEA) constitute a propeptide that is removed on maturation.

The protein belongs to the non-disulfide-bridged peptide (NDBP) superfamily. Medium-length antimicrobial peptide (group 3) family. Ponericin-W subfamily. Expressed by the venom gland.

The protein localises to the secreted. It is found in the target cell membrane. Its function is as follows. May have antimicrobial properties by disrupting the integrity of the bacterial cell membrane. In addition, when tested in vitro on the parasite Trypanosoma cruzi (responsible of the Chagas disease), is able to potently reduce the number of the three forms (epimastigote, trypomastigote and amastigote) by inducing cell death through necrosis. In terms of biological role, may have antimicrobial properties by disrupting the integrity of the bacterial cell membrane. In addition, when tested in vitro on the parasite Trypanosoma cruzi (responsible of the Chagas disease), is able to moderately reduce the number of the forms epimastigote and trypomastigote. Its activity on the amastigote form has not been tested. May have antimicrobial properties by disrupting the integrity of the bacterial cell membrane. In addition, when tested in vitro on the parasite Trypanosoma cruzi (responsible of the Chagas disease), shows only a weak reduction of the number of the trypomastigote forms. Has no activity on the epimastigote forms. Its activity on the amastigote form has not been tested. The chain is M-poneratoxin-Dq3a from Dinoponera quadriceps (South American ant).